A 63-amino-acid polypeptide reads, in one-letter code: Large ribosomal subunit protein uL29 (63 aa).

The protein belongs to the universal ribosomal protein uL29 family.

The polypeptide is Large ribosomal subunit protein uL29 (Ectopseudomonas mendocina (strain ymp) (Pseudomonas mendocina)).